A 90-amino-acid chain; its full sequence is MNDSVKTSLKRTLVGKVVSNKMDKTVTVLVEHRVKHPIYGKYVVRSKKYHAHDEANTYNEGDLVEIQETRPLSKTKAWTVSRLVEAARII.

Belongs to the universal ribosomal protein uS17 family. In terms of assembly, part of the 30S ribosomal subunit.

In terms of biological role, one of the primary rRNA binding proteins, it binds specifically to the 5'-end of 16S ribosomal RNA. The protein is Small ribosomal subunit protein uS17 of Paraburkholderia phymatum (strain DSM 17167 / CIP 108236 / LMG 21445 / STM815) (Burkholderia phymatum).